Reading from the N-terminus, the 117-residue chain is DNA-directed RNA polymerase subunit omega (117 aa).

It belongs to the RNA polymerase subunit omega family. In terms of assembly, the RNAP catalytic core consists of 2 alpha, 1 beta, 1 beta' and 1 omega subunit. When a sigma factor is associated with the core the holoenzyme is formed, which can initiate transcription.

It catalyses the reaction RNA(n) + a ribonucleoside 5'-triphosphate = RNA(n+1) + diphosphate. Promotes RNA polymerase assembly. Latches the N- and C-terminal regions of the beta' subunit thereby facilitating its interaction with the beta and alpha subunits. In Ruegeria pomeroyi (strain ATCC 700808 / DSM 15171 / DSS-3) (Silicibacter pomeroyi), this protein is DNA-directed RNA polymerase subunit omega.